Here is a 398-residue protein sequence, read N- to C-terminus: MIIKPRVRGFICVTTHPAGCEANVKQQIDYVEAKGPVVNGPKKVLVIGSSTGYGLAARITAAFGSGADTLGVFFERPGSESKPGTAGWYNSAAFEKFAHEKGLYARSINGDAFSDEVKRLTIETIKRDLGKVDLVVYSLAAPRRTHPKTGEVFSSTLKPIGKSVSFRGLDTDKEVIKDVVLEAASDQEVADTVAVMGGEDWQMWIDALLEADVLADGAKTTAFTYLGEKITHDIYWNGSIGAAKKDLDQKVLGIRDRLAPLGGDARVSVLKAVVTQASSAIPMMPLYLSLLFKVMKEQGTHEGCIEQVDGLYRESLYGAEPRLDEEGRLRADYKELQPEVQSRVEELWDKVTNENLYELTDFAGYKSEFLNLFGFEVAGVDYEQDVDPDVQIANLIQA.

NAD(+) contacts are provided by residues 48–53, 74–75, 111–112, and 139–140; these read GSSTGY, FE, DA, and LA. Tyr-225 is a binding site for substrate. Residue Tyr-235 is the Proton donor of the active site. NAD(+) is bound by residues Lys-244 and 273-275; that span reads VVT.

This sequence belongs to the TER reductase family. Monomer.

It carries out the reaction a 2,3-saturated acyl-[ACP] + NAD(+) = a (2E)-enoyl-[ACP] + NADH + H(+). The protein operates within lipid metabolism; fatty acid biosynthesis. Its function is as follows. Involved in the final reduction of the elongation cycle of fatty acid synthesis (FAS II). Catalyzes the reduction of a carbon-carbon double bond in an enoyl moiety that is covalently linked to an acyl carrier protein (ACP). The chain is Enoyl-[acyl-carrier-protein] reductase [NADH] from Pseudomonas paraeruginosa (strain DSM 24068 / PA7) (Pseudomonas aeruginosa (strain PA7)).